Reading from the N-terminus, the 270-residue chain is Acyl-[acyl-carrier-protein]--UDP-N-acetylglucosamine O-acyltransferase (270 aa).

This sequence belongs to the transferase hexapeptide repeat family. LpxA subfamily. Homotrimer.

The protein localises to the cytoplasm. It carries out the reaction a (3R)-hydroxyacyl-[ACP] + UDP-N-acetyl-alpha-D-glucosamine = a UDP-3-O-[(3R)-3-hydroxyacyl]-N-acetyl-alpha-D-glucosamine + holo-[ACP]. It participates in glycolipid biosynthesis; lipid IV(A) biosynthesis; lipid IV(A) from (3R)-3-hydroxytetradecanoyl-[acyl-carrier-protein] and UDP-N-acetyl-alpha-D-glucosamine: step 1/6. In terms of biological role, involved in the biosynthesis of lipid A, a phosphorylated glycolipid that anchors the lipopolysaccharide to the outer membrane of the cell. This Helicobacter pylori (strain P12) protein is Acyl-[acyl-carrier-protein]--UDP-N-acetylglucosamine O-acyltransferase.